The primary structure comprises 239 residues: LexA repressor (239 aa).

Residues 26–46 constitute a DNA-binding region (H-T-H motif); that stretch reads FDEMKDALDLASKSGIHRLIT. Residues Ser159 and Lys197 each act as for autocatalytic cleavage activity in the active site.

Belongs to the peptidase S24 family. As to quaternary structure, homodimer.

The enzyme catalyses Hydrolysis of Ala-|-Gly bond in repressor LexA.. Functionally, represses a number of genes involved in the response to DNA damage (SOS response), including recA and lexA. In the presence of single-stranded DNA, RecA interacts with LexA causing an autocatalytic cleavage which disrupts the DNA-binding part of LexA, leading to derepression of the SOS regulon and eventually DNA repair. In Rhizobium etli (strain ATCC 51251 / DSM 11541 / JCM 21823 / NBRC 15573 / CFN 42), this protein is LexA repressor.